Consider the following 228-residue polypeptide: PKHD-type hydroxylase RPE_4577 (228 aa).

The Fe2OG dioxygenase domain occupies 78–180; it reads TIFPPLFNRY…RIASFFWTQS (103 aa). Residues His98, Asp100, and His161 each contribute to the Fe cation site. Arg171 is a 2-oxoglutarate binding site.

Fe(2+) is required as a cofactor. It depends on L-ascorbate as a cofactor.

The chain is PKHD-type hydroxylase RPE_4577 from Rhodopseudomonas palustris (strain BisA53).